Consider the following 446-residue polypeptide: Ribosomal protein uS12 methylthiotransferase RimO (446 aa).

Residues 4-119 (LKVGLISLGC…LVENINNFIS (116 aa)) form the MTTase N-terminal domain. [4Fe-4S] cluster is bound by residues Cys13, Cys48, Cys82, Cys157, Cys161, and Cys164. One can recognise a Radical SAM core domain in the interval 143 to 373 (TTKSHTAYLR…MMLQKHIIYS (231 aa)). One can recognise a TRAM domain in the interval 376–442 (KYKIGNKYKV…EYDLVGVVYD (67 aa)).

Belongs to the methylthiotransferase family. RimO subfamily. Requires [4Fe-4S] cluster as cofactor.

The protein localises to the cytoplasm. The enzyme catalyses L-aspartate(89)-[ribosomal protein uS12]-hydrogen + (sulfur carrier)-SH + AH2 + 2 S-adenosyl-L-methionine = 3-methylsulfanyl-L-aspartate(89)-[ribosomal protein uS12]-hydrogen + (sulfur carrier)-H + 5'-deoxyadenosine + L-methionine + A + S-adenosyl-L-homocysteine + 2 H(+). Functionally, catalyzes the methylthiolation of an aspartic acid residue of ribosomal protein uS12. In Clostridium kluyveri (strain ATCC 8527 / DSM 555 / NBRC 12016 / NCIMB 10680 / K1), this protein is Ribosomal protein uS12 methylthiotransferase RimO.